Consider the following 292-residue polypeptide: Homoserine kinase (292 aa).

81–91 (RPKSGLGSSGA) contacts ATP.

This sequence belongs to the GHMP kinase family. Homoserine kinase subfamily.

It localises to the cytoplasm. It carries out the reaction L-homoserine + ATP = O-phospho-L-homoserine + ADP + H(+). It functions in the pathway amino-acid biosynthesis; L-threonine biosynthesis; L-threonine from L-aspartate: step 4/5. Functionally, catalyzes the ATP-dependent phosphorylation of L-homoserine to L-homoserine phosphate. This Pyrococcus furiosus (strain ATCC 43587 / DSM 3638 / JCM 8422 / Vc1) protein is Homoserine kinase.